The chain runs to 314 residues: Olfactory receptor 5B17 (314 aa).

At 1–23 (MENNTEVSEFILLGLTNAPELQV) the chain is on the extracellular side. Asn3 carries N-linked (GlcNAc...) asparagine glycosylation. A helical membrane pass occupies residues 24-44 (PLFIMFTLIYLITLTGNLGMI). Over 45–52 (ILILLDSH) the chain is Cytoplasmic. The helical transmembrane segment at 53–73 (LHTPMYFFLSNLSLAGIGYSS) threads the bilayer. Residues 74–97 (AVTPKVLTGLLIEDKAISYSACAA) lie on the Extracellular side of the membrane. Cys95 and Cys187 are disulfide-bonded. The chain crosses the membrane as a helical span at residues 98-118 (QMFFCAVFATVENYLLSSMAY). The Cytoplasmic segment spans residues 119–137 (DRYAAVCNPLHYTTTMTTR). Residues 138–158 (VCACLAIGCYVIGFLNASIQI) form a helical membrane-spanning segment. Over 159-194 (GDTFRLSFCMSNVIHHFFCDKPAVITLTCSEKHISE) the chain is Extracellular. Residues 195–215 (LILVLISSFNVFFALLVTLIS) form a helical membrane-spanning segment. The Cytoplasmic segment spans residues 216-235 (YLFILITILKRHTGKGYQKP). The chain crosses the membrane as a helical span at residues 236–256 (LSTCGSHLIAIFLFYITVIIM). Over 257–269 (YIRPSSSHSMDTD) the chain is Extracellular. Residues 270–290 (KIASVFYTMIIPMLSPIVYTL) form a helical membrane-spanning segment. Topologically, residues 291–314 (RNKDVKNAFMKVVEKAKYSLDSVF) are cytoplasmic.

It belongs to the G-protein coupled receptor 1 family.

It is found in the cell membrane. Its function is as follows. Odorant receptor. The chain is Olfactory receptor 5B17 (OR5B17) from Homo sapiens (Human).